The chain runs to 397 residues: tRNA(Met) cytidine acetate ligase (397 aa).

ATP is bound by residues 7–20, G101, N152, and R177; that span reads VTEYNPFHNGHIYH.

The protein belongs to the TmcAL family.

The protein resides in the cytoplasm. It catalyses the reaction cytidine(34) in elongator tRNA(Met) + acetate + ATP = N(4)-acetylcytidine(34) in elongator tRNA(Met) + AMP + diphosphate. Functionally, catalyzes the formation of N(4)-acetylcytidine (ac(4)C) at the wobble position of elongator tRNA(Met), using acetate and ATP as substrates. First activates an acetate ion to form acetyladenylate (Ac-AMP) and then transfers the acetyl group to tRNA to form ac(4)C34. This chain is tRNA(Met) cytidine acetate ligase, found in Leuconostoc citreum (strain KM20).